The following is a 238-amino-acid chain: Splicing regulator RBM11 (238 aa).

Positions 10–87 constitute an RRM domain; it reads RTVFVGNLEA…RPINVQYRFG (78 aa). A disordered region spans residues 172 to 238; the sequence is ALNHSPGPEA…CRKCKKKKRY (67 aa). The Bipartite nuclear localization signal motif lies at 202 to 237; it reads NKRKRQRPDSDSDSSSEDKRGNEGSQKCRKCKKKKR. Positions 228–238 are enriched in basic residues; that stretch reads KCRKCKKKKRY.

Homodimer. As to expression, selectively expressed in brain, cerebellum and testis, and to a lower extent in kidney.

The protein resides in the nucleus. It is found in the nucleoplasm. The protein localises to the nucleus speckle. Tissue-specific splicing factor with potential implication in the regulation of alternative splicing during neuron and germ cell differentiation. Antagonizes SRSF1-mediated BCL-X splicing. May affect the choice of alternative 5' splice sites by binding to specific sequences in exons and antagonizing the SR protein SRSF1. In Mus musculus (Mouse), this protein is Splicing regulator RBM11 (Rbm11).